The primary structure comprises 499 residues: Ammonium transporter MEP2 (499 aa).

Topologically, residues 1 to 31 (MSYNFTGTPTGEGTGGNSLTTDLNTQFDLAN) are extracellular. Asn-4 carries N-linked (GlcNAc...) asparagine glycosylation. Residues 32-52 (MGWIGVASAGVWIMVPGIGLL) form a helical membrane-spanning segment. Residues 53–62 (YSGLSRKKHA) lie on the Cytoplasmic side of the membrane. The chain crosses the membrane as a helical span at residues 63–83 (LSLLWASMMASAVCIFQWFFW). Residues 84-122 (GYSLAFSHNTRGNGFIGTLEFFGFRNVLGAPSSVSSLPD) lie on the Extracellular side of the membrane. A helical transmembrane segment spans residues 123-143 (ILFAVYQGMFAAVTGALMLGG). Topologically, residues 144-152 (ACERARLFP) are cytoplasmic. Residues 153–173 (MMVFLFLWMTIVYCPIACWVW) form a helical membrane-spanning segment. The Extracellular segment spans residues 174–187 (NAEGWLVKLGSLDY). The helical transmembrane segment at 188-208 (AGGLCVHLTSGHGGLVYALIL) threads the bilayer. Topologically, residues 209-230 (GKRNDPVTRKGMPKYKPHSVTS) are cytoplasmic. The chain crosses the membrane as a helical span at residues 231 to 251 (VVLGTVFLWFGWMFFNGGSAG). Residues 252-257 (NATIRA) are Extracellular-facing. A helical membrane pass occupies residues 258-278 (WYSIMSTNLAAACGGLTWMVI). The Cytoplasmic portion of the chain corresponds to 279 to 289 (DYFRCGRKWTT). The helical transmembrane segment at 290–312 (VGLCSGIIAGLVGITPAAGFVPI) threads the bilayer. Topologically, residues 313–315 (WSA) are extracellular. A helical transmembrane segment spans residues 316–338 (VVIGVVTGAGCNLAVDLKSLLRI). The Cytoplasmic segment spans residues 339-346 (DDGLDCYS). The chain crosses the membrane as a helical span at residues 347 to 367 (IHGVGGCIGSVLTGIFAADYV). Residues 368-393 (NATAGSYISPIDGGWINHHYKQVGYQ) lie on the Extracellular side of the membrane. Residues 394–414 (LAGICAALAWTVTVTSILLLT) form a helical membrane-spanning segment. Topologically, residues 415–499 (MNAIPFLKLR…SSTKNTDHIV (85 aa)) are cytoplasmic. Positions 428 to 441 (DEEELGTDAAQIGE) are enhancer domain. Residues 442–449 (FTYEESTA) are linker domain. Residues 450-485 (YIPEPIRSKTSAQMPPPHENIDDKIVGNTDAEKNST) form an autoinhibitory domain region. Positions 455-499 (IRSKTSAQMPPPHENIDDKIVGNTDAEKNSTPSDASSTKNTDHIV) are disordered. Ser-457 carries the post-translational modification Phosphoserine. Residues 468-482 (ENIDDKIVGNTDAEK) show a composition bias toward basic and acidic residues. Residues 483-493 (NSTPSDASSTK) show a composition bias toward polar residues.

Belongs to the ammonia transporter channel (TC 1.A.11.2) family. In terms of processing, phosphorylated at Ser-457 by the TORC1 effector kinase NPR1 under nitrogen-limiting conditions which causes a conformational change in the C-terminal region (CTR) to form an open active conformation. Supplementation of nitrogen source leads to inactivation and instant Ser-457 dephosphorylation via plasma membrane PSR1 and PSR2 redundant phosphatases. The residue Asn-4 of the protein's N-terminal tail is the only site that is glycosylated.

The protein resides in the cell membrane. Functionally, transporter for ammonium (both charged and uncharged NH3 and NH4) to use as a nitrogen source. The affinity of MEP2 is about twenty times higher than that of MEP1. MEP3 has the lowest affinity. Under ammonium limitation acts as an ammonium sensor, generating a signal that leads to pseudohyphal (filamentous) growth. The polypeptide is Ammonium transporter MEP2 (Saccharomyces cerevisiae (strain ATCC 204508 / S288c) (Baker's yeast)).